The sequence spans 950 residues: Protein translocase subunit SecA 1 (950 aa).

Residues Gln83, 101-105 (GEGKT), and Asp490 each bind ATP. A disordered region spans residues 864–950 (EGGAGRKNAA…AKPPKSVKKR (87 aa)). Basic and acidic residues predominate over residues 873–888 (AAREEAPSRLRAKGIE).

This sequence belongs to the SecA family. As to quaternary structure, monomer and homodimer. Part of the essential Sec protein translocation apparatus which comprises SecA, SecYEG and auxiliary proteins SecDF. Other proteins may also be involved.

The protein localises to the cell membrane. It localises to the cytoplasm. The enzyme catalyses ATP + H2O + cellular proteinSide 1 = ADP + phosphate + cellular proteinSide 2.. Its function is as follows. Part of the Sec protein translocase complex. Interacts with the SecYEG preprotein conducting channel. Has a central role in coupling the hydrolysis of ATP to the transfer of proteins into and across the cell membrane, serving as an ATP-driven molecular motor driving the stepwise translocation of polypeptide chains across the membrane. The chain is Protein translocase subunit SecA 1 from Mycobacterium ulcerans (strain Agy99).